Reading from the N-terminus, the 70-residue chain is MGMRMMFTMILLVVLVTTVVSFTLDRVLGPVSDGRNAAPDDEKFDRMEYFLSKCCANPSTCDLSLLCIFG.

The first 21 residues, 1–21 (MGMRMMFTMILLVVLVTTVVS), serve as a signal peptide directing secretion. 2 cysteine pairs are disulfide-bonded: C54-C61 and C55-C67. F69 is subject to Phenylalanine amide.

Belongs to the conotoxin A superfamily. Expressed by the venom duct.

The protein localises to the secreted. Functionally, probable neurotoxin with unknown target. Possibly targets ion channels. The protein is Conotoxin Pl171 of Conus planorbis (Planorbis cone).